The following is a 285-amino-acid chain: Sulfotransferase 2A1 (285 aa).

3'-phosphoadenylyl sulfate contacts are provided by lysine 44, serine 45, glycine 46, threonine 47, asparagine 48, and tryptophan 49. The active-site Proton acceptor is the histidine 99. 3'-phosphoadenylyl sulfate is bound by residues arginine 121, serine 129, tyrosine 184, serine 218, methionine 223, arginine 247, lysine 248, and glycine 249.

It belongs to the sulfotransferase 1 family. In terms of assembly, homodimer. Highly expressed in liver.

It localises to the cytoplasm. It carries out the reaction an alcohol + 3'-phosphoadenylyl sulfate = an alkyl sulfate + adenosine 3',5'-bisphosphate + H(+). The enzyme catalyses taurolithocholate + 3'-phosphoadenylyl sulfate = taurolithocholate 3-sulfate + adenosine 3',5'-bisphosphate + H(+). It catalyses the reaction pregnenolone + 3'-phosphoadenylyl sulfate = pregnenolone sulfate + adenosine 3',5'-bisphosphate + H(+). The catalysed reaction is 3beta-hydroxyandrost-5-en-17-one + 3'-phosphoadenylyl sulfate = dehydroepiandrosterone 3-sulfate + adenosine 3',5'-bisphosphate + H(+). It carries out the reaction lithocholate + 3'-phosphoadenylyl sulfate = lithocholate sulfate + adenosine 3',5'-bisphosphate + H(+). The enzyme catalyses (24S)-hydroxycholesterol + 3'-phosphoadenylyl sulfate = (24S)-hydroxycholesterol 24-sulfate + adenosine 3',5'-bisphosphate + H(+). It catalyses the reaction (24S)-hydroxycholesterol + 3'-phosphoadenylyl sulfate = (24S)-hydroxycholesterol 3-sulfate + adenosine 3',5'-bisphosphate + H(+). The catalysed reaction is (24S)-hydroxycholesterol 24-sulfate + 3'-phosphoadenylyl sulfate = (24S)-hydroxycholesterol 3,24-disulfate + adenosine 3',5'-bisphosphate + H(+). It carries out the reaction androsterone + 3'-phosphoadenylyl sulfate = androsterone 3alpha-sulfate + adenosine 3',5'-bisphosphate + H(+). In terms of biological role, sulfotransferase that utilizes 3'-phospho-5'-adenylyl sulfate (PAPS) as sulfonate donor to catalyze the sulfonation of steroids and bile acids in the liver and adrenal glands. Mediates the sulfation of a wide range of steroids and sterols, including pregnenolone, androsterone, DHEA, bile acids, cholesterol and as well many xenobiotics that contain alcohol and phenol functional groups. Sulfonation increases the water solubility of most compounds, and therefore their renal excretion, but it can also result in bioactivation to form active metabolites. Plays an important role in maintening steroid and lipid homeostasis. Plays a key role in bile acid metabolism. In addition, catalyzes the metabolic activation of potent carcinogenic polycyclic arylmethanols. The sequence is that of Sulfotransferase 2A1 (Sult2a1) from Mus musculus (Mouse).